Reading from the N-terminus, the 1254-residue chain is Zinc finger protein BRUTUS-like At1g18910 (1254 aa).

A disordered region spans residues 1 to 30 (MGVGDPLPLPPEKNRREVNKPPDIASTSSS). Residues 454–474 (IHFLPLGLLKCVIMWFSAQLP) form a helical membrane-spanning segment. Residues 1013–1082 (PHKLIFGCKH…ASCSNISCSS (70 aa)) form a CHY-type zinc finger. Residues cysteine 1020, histidine 1022, cysteine 1033, cysteine 1034, cysteine 1040, cysteine 1043, histidine 1044, histidine 1050, cysteine 1062, cysteine 1065, cysteine 1075, cysteine 1080, cysteine 1089, cysteine 1092, histidine 1103, cysteine 1104, cysteine 1107, cysteine 1110, histidine 1122, cysteine 1123, cysteine 1126, cysteine 1129, histidine 1137, and cysteine 1139 each coordinate Zn(2+). The segment at 1084-1147 (MGKYYCKICK…VCREKCLEDN (64 aa)) adopts a CTCHY-type zinc-finger fold. The RING-type; atypical zinc-finger motif lies at 1148-1190 (CPICHEYIFTSNSPVKALPCGHVMHSTCFQEYTCSHYTCPICS).

As to quaternary structure, binds zinc and iron ions.

The protein localises to the membrane. It localises to the nucleus. It functions in the pathway protein modification; protein ubiquitination. Probable E3 ubiquitin-protein ligase that may regulate the response to iron deficiency and thus contributes to iron homeostasis. This chain is Zinc finger protein BRUTUS-like At1g18910, found in Arabidopsis thaliana (Mouse-ear cress).